Here is a 515-residue protein sequence, read N- to C-terminus: 2-isopropylmalate synthase (515 aa).

The 263-residue stretch at 4–266 (IKFFDTTLRD…ETRLNLQEIK (263 aa)) folds into the Pyruvate carboxyltransferase domain. Mn(2+) contacts are provided by aspartate 13, histidine 201, histidine 203, and asparagine 237. A regulatory domain region spans residues 391–515 (QLSSIQVQYG…RAENEKVATS (125 aa)).

The protein belongs to the alpha-IPM synthase/homocitrate synthase family. LeuA type 1 subfamily. As to quaternary structure, homodimer. Mn(2+) is required as a cofactor.

It is found in the cytoplasm. The catalysed reaction is 3-methyl-2-oxobutanoate + acetyl-CoA + H2O = (2S)-2-isopropylmalate + CoA + H(+). Its pathway is amino-acid biosynthesis; L-leucine biosynthesis; L-leucine from 3-methyl-2-oxobutanoate: step 1/4. Catalyzes the condensation of the acetyl group of acetyl-CoA with 3-methyl-2-oxobutanoate (2-ketoisovalerate) to form 3-carboxy-3-hydroxy-4-methylpentanoate (2-isopropylmalate). The sequence is that of 2-isopropylmalate synthase from Geobacillus stearothermophilus (Bacillus stearothermophilus).